Consider the following 515-residue polypeptide: Tyrosine decarboxylase 1 (515 aa).

Tandem repeats lie at residues 81 to 138 and 141 to 192. Residues 81-192 are 2 X approximate tandem repeats; the sequence is DDITNHIVPG…KVLNKIGKDQ (112 aa). Alanine 105 lines the substrate pocket. Threonine 169 and cysteine 170 together coordinate pyridoxal 5'-phosphate. Residue histidine 205 coordinates substrate. Pyridoxal 5'-phosphate contacts are provided by threonine 264 and asparagine 318. The residue at position 321 (lysine 321) is an N6-(pyridoxal phosphate)lysine.

Belongs to the group II decarboxylase family. Requires pyridoxal 5'-phosphate as cofactor. Mostly expressed in bulbs, and, to a lower extent, in stems, roots, leaves and flowers.

The catalysed reaction is L-tyrosine + H(+) = tyramine + CO2. It participates in alkaloid biosynthesis. Catalyzes the decarboxylation of L-tyrosine to tyramine, which is converted to norbelladine, a precursor to all Amaryllidaceae alkaloids such as galanthamine, lycorine and haemanthamine, and including haemanthamine- and crinamine-type alkaloids, promising anticancer agents. The protein is Tyrosine decarboxylase 1 of Narcissus pseudonarcissus (Daffodil).